A 36-amino-acid polypeptide reads, in one-letter code: Insecticidal toxin LaIT1 (36 aa).

2 disulfide bridges follow: cysteine 11-cysteine 23 and cysteine 17-cysteine 29.

Expressed by the venom gland.

It is found in the secreted. In terms of biological role, affects the activity of both ryanodine-sensitive calcium-release channels RyR1 and RyR2 with high potency. At lower concentrations the toxin increases full openings of the RyRs, and at higher concentrations it inhibits full openings and induce openings to subconductance levels and reduces the number of full conductance openings. The different actions may be attributed to the toxins binding at different sites on the RyRs, with binding at a high-affinity site mediating the increase in full openings and the induction of subconductance states evoked upon binding to a lower-affinity site. Shows insect lethality against crickets and common cutworms (only shows paralysis against cockroaches), but no toxicity is observed in mice. The sequence is that of Insecticidal toxin LaIT1 from Liocheles australasiae (Dwarf wood scorpion).